The following is a 384-amino-acid chain: MEIVKTIIPHNRSYIEPPIPSATEWLANMSVMHVSCLTIACVFVAITFLSSFFHLFFVLKYVSNERIRNDMYALIFMFPITTFASLVGMFIPRAAIFLYAVSLVYFMFTLFIMVTLLFNIFGGRQEMSAYLLQRNIRVNFTVPPLCFFKFLPTVESTDQNLRRIEWLVFQTPIIRTLLELVSVVVSMEQEGRRESVWFVFSQLMALLSMCIAFYGCYVMVPLGREKHAPYRFDFLFRTCDIAQCIYTIQKFVFEFAAAVGLITSDRYLPAAAKALWWASFMCTWEMMLLSALCSYCLRPAKCKFFDLYPGNDMPALSARDGSNSRVPSFSRRLSIEYEPRIAGVMLEPPSRSSLSITPRDKIEDPTTVSYFADNFDSLSQIQGQ.

Residues 1–38 are Extracellular-facing; the sequence is MEIVKTIIPHNRSYIEPPIPSATEWLANMSVMHVSCLT. N-linked (GlcNAc...) asparagine glycans are attached at residues asparagine 11 and asparagine 28. The helical transmembrane segment at 39–59 threads the bilayer; that stretch reads IACVFVAITFLSSFFHLFFVL. Over 60 to 70 the chain is Cytoplasmic; the sequence is KYVSNERIRND. The helical transmembrane segment at 71-91 threads the bilayer; the sequence is MYALIFMFPITTFASLVGMFI. At 92-93 the chain is on the extracellular side; it reads PR. Residues 94–114 traverse the membrane as a helical segment; it reads AAIFLYAVSLVYFMFTLFIMV. Topologically, residues 115–165 are cytoplasmic; the sequence is TLLFNIFGGRQEMSAYLLQRNIRVNFTVPPLCFFKFLPTVESTDQNLRRIE. Residues 166 to 186 form a helical membrane-spanning segment; sequence WLVFQTPIIRTLLELVSVVVS. Topologically, residues 187–202 are extracellular; the sequence is MEQEGRRESVWFVFSQ. Residues 203 to 223 traverse the membrane as a helical segment; sequence LMALLSMCIAFYGCYVMVPLG. At 224-240 the chain is on the cytoplasmic side; sequence REKHAPYRFDFLFRTCD. The helical transmembrane segment at 241-261 threads the bilayer; that stretch reads IAQCIYTIQKFVFEFAAAVGL. At 262 to 273 the chain is on the extracellular side; that stretch reads ITSDRYLPAAAK. A helical transmembrane segment spans residues 274-294; the sequence is ALWWASFMCTWEMMLLSALCS. The Cytoplasmic segment spans residues 295–384; the sequence is YCLRPAKCKF…FDSLSQIQGQ (90 aa).

The protein belongs to the OST-alpha family.

It is found in the cell membrane. Probable transporter. The polypeptide is Organic solute transporter alpha-like protein 1 (osta-1) (Caenorhabditis elegans).